We begin with the raw amino-acid sequence, 291 residues long: Probable cell wall amidase LytH (291 aa).

The N-terminal stretch at 1–40 (MKKIDSWLTKHGLKNRLTLVVIVIFIIFLILLFMFVNLSD) is a signal peptide. One can recognise an SH3b domain in the interval 41 to 105 (EDTGQITITE…WVAGWHTNLN (65 aa)). The MurNAc-LAA domain maps to 122-286 (IVLDPGHGGS…VEQAIVDGLK (165 aa)). The segment at 123 to 147 (VLDPGHGGSDQGASSSTPSKSLEKN) is disordered. Polar residues predominate over residues 133-142 (QGASSSTPSK).

This sequence belongs to the N-acetylmuramoyl-L-alanine amidase 3 family.

It is found in the secreted. In terms of biological role, probably involved in cell-wall metabolism. The protein is Probable cell wall amidase LytH (lytH) of Staphylococcus epidermidis (strain ATCC 12228 / FDA PCI 1200).